The sequence spans 525 residues: GMP synthase [glutamine-hydrolyzing] (525 aa).

One can recognise a Glutamine amidotransferase type-1 domain in the interval 8–207 (KILILDFGSQ…ALDICGCAAN (200 aa)). C85 (nucleophile) is an active-site residue. Residues H181 and E183 contribute to the active site. The region spanning 208–400 (WKPSSIIEDA…LGLPYNMLYR (193 aa)) is the GMPS ATP-PPase domain. 235-241 (SGGVDSS) is an ATP binding site.

In terms of assembly, homodimer.

The catalysed reaction is XMP + L-glutamine + ATP + H2O = GMP + L-glutamate + AMP + diphosphate + 2 H(+). Its pathway is purine metabolism; GMP biosynthesis; GMP from XMP (L-Gln route): step 1/1. Functionally, catalyzes the synthesis of GMP from XMP. In Shewanella putrefaciens (strain CN-32 / ATCC BAA-453), this protein is GMP synthase [glutamine-hydrolyzing].